The sequence spans 314 residues: 3'-5' exoribonuclease YhaM (314 aa).

In terms of domain architecture, HD spans 163–279 (HVVSMLDLAK…LHYIDNLDAK (117 aa)).

The protein belongs to the YhaM family.

Shows a 3'-5' exoribonuclease activity. In Bacillus cereus (strain AH820), this protein is 3'-5' exoribonuclease YhaM.